A 241-amino-acid chain; its full sequence is Mitochondrial inner membrane protease ATP23 (241 aa).

His-141 serves as a coordination point for a divalent metal cation. Glu-142 is a catalytic residue. Residue His-145 coordinates a divalent metal cation.

The protein belongs to the peptidase M76 family.

The protein resides in the mitochondrion inner membrane. In terms of biological role, has a dual role in the assembly of mitochondrial ATPase. Acts as a protease that removes N-terminal residues of mitochondrial ATPase CF(0) subunit 6 at the intermembrane space side. Also involved in the correct assembly of the membrane-embedded ATPase CF(0) particle, probably mediating association of subunit 6 with the subunit 9 ring. This Lodderomyces elongisporus (strain ATCC 11503 / CBS 2605 / JCM 1781 / NBRC 1676 / NRRL YB-4239) (Yeast) protein is Mitochondrial inner membrane protease ATP23 (ATP23).